A 361-amino-acid chain; its full sequence is Chorismate synthase (361 aa).

NADP(+)-binding residues include arginine 48 and arginine 54. FMN is bound by residues 125 to 127 (RSS), 238 to 239 (NA), glycine 278, 293 to 297 (KPTSS), and arginine 319.

The protein belongs to the chorismate synthase family. In terms of assembly, homotetramer. The cofactor is FMNH2.

The catalysed reaction is 5-O-(1-carboxyvinyl)-3-phosphoshikimate = chorismate + phosphate. Its pathway is metabolic intermediate biosynthesis; chorismate biosynthesis; chorismate from D-erythrose 4-phosphate and phosphoenolpyruvate: step 7/7. In terms of biological role, catalyzes the anti-1,4-elimination of the C-3 phosphate and the C-6 proR hydrogen from 5-enolpyruvylshikimate-3-phosphate (EPSP) to yield chorismate, which is the branch point compound that serves as the starting substrate for the three terminal pathways of aromatic amino acid biosynthesis. This reaction introduces a second double bond into the aromatic ring system. The chain is Chorismate synthase from Yersinia enterocolitica serotype O:8 / biotype 1B (strain NCTC 13174 / 8081).